The chain runs to 125 residues: Prepro-urotensin II-alpha (125 aa).

The first 21 residues, 1–21 (MMCNLLLSFSVLLLSCTHLVA), serve as a signal peptide directing secretion. The propeptide occupies 109 to 111 (QFR). Cys119 and Cys124 are disulfide-bonded.

The protein belongs to the urotensin-2 family.

Its subcellular location is the secreted. Functionally, urotensin is found in the teleost caudal neurosecretory system. It has a suggested role in osmoregulation and as a corticotropin-releasing factor. The non-hormonal portion of this precursor may be a urotensin binding protein, urophysin. The polypeptide is Prepro-urotensin II-alpha (Cyprinus carpio (Common carp)).